Here is a 72-residue protein sequence, read N- to C-terminus: Hirudin variant-2 (72 aa).

A signal peptide spans 1-7 (AICVSQA). The tract at residues 8–10 (ITY) is interaction with thrombin active site. Cystine bridges form between Cys-13-Cys-21, Cys-23-Cys-35, and Cys-29-Cys-46. Positions 47–72 (VTGEGTPNPESHNNGDFEEIPEEYLQ) are disordered. O-linked (GalNAc...) threonine glycosylation is present at Thr-52. The tract at residues 62 to 72 (DFEEIPEEYLQ) is interaction with fibrinogen-binding exosite of thrombin. Residues 62-72 (DFEEIPEEYLQ) are compositionally biased toward acidic residues. Tyr-70 bears the Sulfotyrosine mark.

This sequence belongs to the protease inhibitor I14 (hirudin) family.

The protein localises to the secreted. Its function is as follows. Hirudin is a potent thrombin-specific protease inhibitor. It forms a stable non-covalent complex with alpha-thrombin, thereby abolishing its ability to cleave fibrinogen. The protein is Hirudin variant-2 of Hirudo medicinalis (Medicinal leech).